Reading from the N-terminus, the 269-residue chain is Major pollen allergen Pha a 1 (269 aa).

Positions 1 to 29 (MMKMVCSSSSSSLLVVAALLAVFVGSAQG) are cleaved as a signal peptide. N-linked (GlcNAc...) asparagine glycosylation is present at Asn38. Positions 67–173 (GGACGYKDVD…RRVKCKYPDG (107 aa)) constitute an Expansin-like EG45 domain. The 82-residue stretch at 187–268 (NYLALLVKYV…GWKADTHDAS (82 aa)) folds into the Expansin-like CBD domain.

The protein belongs to the expansin family. Expansin B subfamily.

It localises to the secreted. This Phalaris aquatica (Canary grass) protein is Major pollen allergen Pha a 1.